Consider the following 213-residue polypeptide: 3,4-dihydroxy-2-butanone 4-phosphate synthase (213 aa).

D-ribulose 5-phosphate is bound by residues 37–38 (RE), D42, 150–154 (RSGHT), and E174. A Mg(2+)-binding site is contributed by E38. H153 contacts Mg(2+).

Belongs to the DHBP synthase family. As to quaternary structure, homodimer. It depends on Mg(2+) as a cofactor. The cofactor is Mn(2+).

It catalyses the reaction D-ribulose 5-phosphate = (2S)-2-hydroxy-3-oxobutyl phosphate + formate + H(+). It functions in the pathway cofactor biosynthesis; riboflavin biosynthesis; 2-hydroxy-3-oxobutyl phosphate from D-ribulose 5-phosphate: step 1/1. Functionally, catalyzes the conversion of D-ribulose 5-phosphate to formate and 3,4-dihydroxy-2-butanone 4-phosphate. The polypeptide is 3,4-dihydroxy-2-butanone 4-phosphate synthase (Blochmanniella floridana).